Reading from the N-terminus, the 365-residue chain is tRNA/tmRNA (uracil-C(5))-methyltransferase (365 aa).

Residues Gln-189, Tyr-217, Asn-222, Glu-238, and Asp-298 each contribute to the S-adenosyl-L-methionine site. Cys-323 acts as the Nucleophile in catalysis. Glu-357 serves as the catalytic Proton acceptor.

The protein belongs to the class I-like SAM-binding methyltransferase superfamily. RNA M5U methyltransferase family. TrmA subfamily.

The enzyme catalyses uridine(54) in tRNA + S-adenosyl-L-methionine = 5-methyluridine(54) in tRNA + S-adenosyl-L-homocysteine + H(+). It carries out the reaction uridine(341) in tmRNA + S-adenosyl-L-methionine = 5-methyluridine(341) in tmRNA + S-adenosyl-L-homocysteine + H(+). In terms of biological role, dual-specificity methyltransferase that catalyzes the formation of 5-methyluridine at position 54 (m5U54) in all tRNAs, and that of position 341 (m5U341) in tmRNA (transfer-mRNA). In Shewanella denitrificans (strain OS217 / ATCC BAA-1090 / DSM 15013), this protein is tRNA/tmRNA (uracil-C(5))-methyltransferase.